The sequence spans 157 residues: UPF0756 membrane protein BH3161 (157 aa).

Helical transmembrane passes span 1–21 (MISQ…LAKN), 54–74 (LGVT…EIGF), 87–107 (WVAL…IDLL), and 117–137 (LVLG…GPLI).

This sequence belongs to the UPF0756 family.

It localises to the cell membrane. The sequence is that of UPF0756 membrane protein BH3161 from Halalkalibacterium halodurans (strain ATCC BAA-125 / DSM 18197 / FERM 7344 / JCM 9153 / C-125) (Bacillus halodurans).